The following is a 386-amino-acid chain: Succinate--CoA ligase [ADP-forming] subunit beta (386 aa).

An ATP-grasp domain is found at 9–244 (KEILRNFGVP…LDEEDPAEVE (236 aa)). ATP contacts are provided by residues K46, 53–55 (GRG), E99, A102, and E107. Positions 199 and 213 each coordinate Mg(2+). Residues N264 and 321-323 (GIM) each bind substrate.

Belongs to the succinate/malate CoA ligase beta subunit family. In terms of assembly, heterotetramer of two alpha and two beta subunits. Requires Mg(2+) as cofactor.

It carries out the reaction succinate + ATP + CoA = succinyl-CoA + ADP + phosphate. The catalysed reaction is GTP + succinate + CoA = succinyl-CoA + GDP + phosphate. It functions in the pathway carbohydrate metabolism; tricarboxylic acid cycle; succinate from succinyl-CoA (ligase route): step 1/1. Its function is as follows. Succinyl-CoA synthetase functions in the citric acid cycle (TCA), coupling the hydrolysis of succinyl-CoA to the synthesis of either ATP or GTP and thus represents the only step of substrate-level phosphorylation in the TCA. The beta subunit provides nucleotide specificity of the enzyme and binds the substrate succinate, while the binding sites for coenzyme A and phosphate are found in the alpha subunit. This chain is Succinate--CoA ligase [ADP-forming] subunit beta, found in Polaromonas naphthalenivorans (strain CJ2).